We begin with the raw amino-acid sequence, 454 residues long: Mogroside I-E synthase (454 aa).

The Proton acceptor role is filled by His-18. An anthocyanidin is bound at residue His-18. Residue Asp-111 is the Charge relay of the active site. His-144 contributes to the an anthocyanidin binding site. A disulfide bridge connects residues Cys-259 and Cys-331. 7 residues coordinate UDP-alpha-D-glucose: Ser-278, Cys-331, Gln-333, Trp-351, Asn-352, Ser-353, and Glu-356. Residue Ala-371 participates in an anthocyanidin binding. Residues Asp-372 and Gln-373 each coordinate UDP-alpha-D-glucose.

Belongs to the UDP-glycosyltransferase family. Highly expressed in young fruits 15 days after anthesis (15-DAA).

It catalyses the reaction mogrol + UDP-alpha-D-glucose = mogroside IE + UDP + H(+). It functions in the pathway secondary metabolite biosynthesis; terpenoid biosynthesis. With respect to regulation, activity is increased by Mg(2+). UDP-glycosyltransferase involved in the biosynthesis of cucurbitacin and mogroside tetracyclic triterpene natural products (e.g. siamenoside I and mogrosides IV, V and VI). Cucurbitacins have cytotoxic properties and exhibit deterrent taste as a defense barrier against herbivores. Mogrosides are nonsugar highly oxygenated compounds used as high-intensity zero-calorie sweeteners; they also possess pharmacological properties such as regulating immunity, lowering blood sugar and lipid levels, protecting the liver, and acting as antioxidants and antitumor agents. Catalyzes the transfer of a glucose moiety to the C-3 hydroxyl of mogrol to form mogroside I-E. Besides mogrol, UGT74AC1 also shows activity in vitro with quercetin and naringenin as substrate. In Siraitia grosvenorii (Monk's fruit), this protein is Mogroside I-E synthase.